The sequence spans 469 residues: uncharacterized protein (469 aa).

This is an uncharacterized protein from Methanocaldococcus jannaschii (strain ATCC 43067 / DSM 2661 / JAL-1 / JCM 10045 / NBRC 100440) (Methanococcus jannaschii).